We begin with the raw amino-acid sequence, 97 residues long: Small ribosomal subunit protein bS20 (97 aa).

The protein belongs to the bacterial ribosomal protein bS20 family.

Functionally, binds directly to 16S ribosomal RNA. The sequence is that of Small ribosomal subunit protein bS20 from Prochlorococcus marinus (strain AS9601).